A 317-amino-acid chain; its full sequence is Acetyl-coenzyme A carboxylase carboxyl transferase subunit alpha (317 aa).

Residues 40-293 (LEGRVRDAMV…ETVIGDALKE (254 aa)) enclose the CoA carboxyltransferase C-terminal domain.

Belongs to the AccA family. As to quaternary structure, acetyl-CoA carboxylase is a heterohexamer composed of biotin carboxyl carrier protein (AccB), biotin carboxylase (AccC) and two subunits each of ACCase subunit alpha (AccA) and ACCase subunit beta (AccD).

It localises to the cytoplasm. It catalyses the reaction N(6)-carboxybiotinyl-L-lysyl-[protein] + acetyl-CoA = N(6)-biotinyl-L-lysyl-[protein] + malonyl-CoA. The protein operates within lipid metabolism; malonyl-CoA biosynthesis; malonyl-CoA from acetyl-CoA: step 1/1. Its function is as follows. Component of the acetyl coenzyme A carboxylase (ACC) complex. First, biotin carboxylase catalyzes the carboxylation of biotin on its carrier protein (BCCP) and then the CO(2) group is transferred by the carboxyltransferase to acetyl-CoA to form malonyl-CoA. The protein is Acetyl-coenzyme A carboxylase carboxyl transferase subunit alpha of Rhizobium meliloti (strain 1021) (Ensifer meliloti).